The chain runs to 566 residues: DNA ligase B (566 aa).

Lys-125 acts as the N6-AMP-lysine intermediate in catalysis.

This sequence belongs to the NAD-dependent DNA ligase family. LigB subfamily.

It catalyses the reaction NAD(+) + (deoxyribonucleotide)n-3'-hydroxyl + 5'-phospho-(deoxyribonucleotide)m = (deoxyribonucleotide)n+m + AMP + beta-nicotinamide D-nucleotide.. In terms of biological role, catalyzes the formation of phosphodiester linkages between 5'-phosphoryl and 3'-hydroxyl groups in double-stranded DNA using NAD as a coenzyme and as the energy source for the reaction. The protein is DNA ligase B of Pseudomonas putida (strain ATCC 700007 / DSM 6899 / JCM 31910 / BCRC 17059 / LMG 24140 / F1).